Consider the following 539-residue polypeptide: Chaperonin GroEL 1 (539 aa).

Residues 30-33 (TLGP), Lys51, 87-91 (DGTTT), Gly415, 480-482 (NAA), and Asp496 contribute to the ATP site.

Belongs to the chaperonin (HSP60) family. In terms of assembly, forms a cylinder of 14 subunits composed of two heptameric rings stacked back-to-back. Interacts with the co-chaperonin GroES.

It localises to the cytoplasm. The catalysed reaction is ATP + H2O + a folded polypeptide = ADP + phosphate + an unfolded polypeptide.. Its function is as follows. Together with its co-chaperonin GroES, plays an essential role in assisting protein folding. The GroEL-GroES system forms a nano-cage that allows encapsulation of the non-native substrate proteins and provides a physical environment optimized to promote and accelerate protein folding. In Bradyrhizobium sp. (strain ORS 278), this protein is Chaperonin GroEL 1.